The chain runs to 422 residues: D-amino acid dehydrogenase (422 aa).

Residue 3-17 participates in FAD binding; sequence VVVIGAGVVGTASAW.

It belongs to the DadA oxidoreductase family. FAD is required as a cofactor.

The catalysed reaction is a D-alpha-amino acid + A + H2O = a 2-oxocarboxylate + AH2 + NH4(+). The protein operates within amino-acid degradation; D-alanine degradation; NH(3) and pyruvate from D-alanine: step 1/1. In terms of biological role, oxidative deamination of D-amino acids. In Paramagnetospirillum magneticum (strain ATCC 700264 / AMB-1) (Magnetospirillum magneticum), this protein is D-amino acid dehydrogenase.